The chain runs to 243 residues: MPEDAAVAGGEAGALVLFSGGQDSATCLAWALDRFPHVETLGFDYGQRHWVELDRRAALRQGLTALDPAWGRRLGPDHTLALAALGEISDTALTRDSAIAFARDGLPNTFVPGRNLAFLTFAAALAYRRGLRHIVGGMCETDYSGYPDCRDDTIKALQVALNLGMERRFVLHTPLMWIDKAQTWALAETLGGRALVELVVEESHTCYLGERGARHEWGYGCGTCPACDLRAKGFSRYLAARAD.

Residue 18–28 (FSGGQDSATCL) coordinates ATP. Zn(2+) is bound by residues Cys206, Cys221, Cys224, and Cys227.

This sequence belongs to the QueC family. Requires Zn(2+) as cofactor.

The catalysed reaction is 7-carboxy-7-deazaguanine + NH4(+) + ATP = 7-cyano-7-deazaguanine + ADP + phosphate + H2O + H(+). Its pathway is purine metabolism; 7-cyano-7-deazaguanine biosynthesis. Catalyzes the ATP-dependent conversion of 7-carboxy-7-deazaguanine (CDG) to 7-cyano-7-deazaguanine (preQ(0)). This chain is 7-cyano-7-deazaguanine synthase, found in Methylorubrum extorquens (strain CM4 / NCIMB 13688) (Methylobacterium extorquens).